A 91-amino-acid chain; its full sequence is Putative 26S proteasome complex subunit sem-1 (91 aa).

Residues 1–73 are disordered; that stretch reads MASTQPKNDA…SWDDDDTSDD (73 aa). The segment covering 8 to 28 has biased composition (basic and acidic residues); that stretch reads NDAKSTEPKPEQPVTEKKTAV. 2 stretches are compositionally biased toward acidic residues: residues 29 to 48 and 63 to 72; these read LEEDDEFEDFPVDDWEAEDT and ESWDDDDTSD.

The protein belongs to the DSS1/SEM1 family. In terms of assembly, part of the 26S proteasome.

In terms of biological role, subunit of the 26S proteasome which plays a role in ubiquitin-dependent proteolysis. The protein is Putative 26S proteasome complex subunit sem-1 (sem-1) of Neurospora crassa (strain ATCC 24698 / 74-OR23-1A / CBS 708.71 / DSM 1257 / FGSC 987).